We begin with the raw amino-acid sequence, 367 residues long: mRNA-decapping enzyme-like protein (367 aa).

3 disordered regions span residues 144 to 179, 196 to 246, and 299 to 333; these read PKAS…RDAP, NTAS…SSSP, and PNNA…PTGP. The segment covering 196–211 has biased composition (polar residues); sequence NTASGSASGPYQSSAI. The span at 212–234 shows a compositional bias: low complexity; sequence PHQPHQPHQPTIAPPVAAAAPPQ. Residues 299 to 309 are compositionally biased toward polar residues; that stretch reads PNNASHQQRSY. Residues 315–331 show a composition bias toward pro residues; the sequence is QPFPPPTPPPSLAPAPT.

It belongs to the DCP1 family. In terms of assembly, homodimer. Component of the decapping complex. Interacts with DCP2 and DCP5. Interacts with BCHA1. In terms of tissue distribution, expressed in seedlings, mostly in root tips, root hairs, and the vascular system. Also present in roots, leaves, stems, and flowers.

Its subcellular location is the cytoplasm. It is found in the P-body. As a component of the decapping complex, involved in the degradation of mRNAs. Essential for postembryonic development. This chain is mRNA-decapping enzyme-like protein, found in Arabidopsis thaliana (Mouse-ear cress).